Consider the following 478-residue polypeptide: Protein nucleotidyltransferase YdiU (478 aa).

Residues Gly84, Gly86, Arg87, Lys107, Asp119, Gly120, Arg170, and Arg177 each contribute to the ATP site. Asp246 functions as the Proton acceptor in the catalytic mechanism. 2 residues coordinate Mg(2+): Asn247 and Asp256. Asp256 contributes to the ATP binding site.

This sequence belongs to the SELO family. Mg(2+) is required as a cofactor. The cofactor is Mn(2+).

The enzyme catalyses L-seryl-[protein] + ATP = 3-O-(5'-adenylyl)-L-seryl-[protein] + diphosphate. It catalyses the reaction L-threonyl-[protein] + ATP = 3-O-(5'-adenylyl)-L-threonyl-[protein] + diphosphate. The catalysed reaction is L-tyrosyl-[protein] + ATP = O-(5'-adenylyl)-L-tyrosyl-[protein] + diphosphate. It carries out the reaction L-histidyl-[protein] + UTP = N(tele)-(5'-uridylyl)-L-histidyl-[protein] + diphosphate. The enzyme catalyses L-seryl-[protein] + UTP = O-(5'-uridylyl)-L-seryl-[protein] + diphosphate. It catalyses the reaction L-tyrosyl-[protein] + UTP = O-(5'-uridylyl)-L-tyrosyl-[protein] + diphosphate. Its function is as follows. Nucleotidyltransferase involved in the post-translational modification of proteins. It can catalyze the addition of adenosine monophosphate (AMP) or uridine monophosphate (UMP) to a protein, resulting in modifications known as AMPylation and UMPylation. This is Protein nucleotidyltransferase YdiU from Escherichia coli (strain ATCC 8739 / DSM 1576 / NBRC 3972 / NCIMB 8545 / WDCM 00012 / Crooks).